The chain runs to 601 residues: Probable cytochrome P450 525A1 (601 aa).

A helical membrane pass occupies residues 12-32 (ISYFLTCSIFGFILWILTEQI). Residues 205 to 253 (NNNNNNNNNNNNNNNNNNNNNNNNNNNNNNNNNNNNNNNNNNNNNNNNN) form a disordered region. C544 lines the heme pocket.

The protein belongs to the cytochrome P450 family. The cofactor is heme.

Its subcellular location is the membrane. The protein is Probable cytochrome P450 525A1 (cyp525A1) of Dictyostelium discoideum (Social amoeba).